Here is a 1011-residue protein sequence, read N- to C-terminus: Protein translocase subunit SecA, chloroplastic (1011 aa).

Residues 1-17 (MATSSLCSSFTSQTCNP) show a composition bias toward polar residues. Residues 1–22 (MATSSLCSSFTSQTCNPHSRPH) form a disordered region. The transit peptide at 1–59 (MATSSLCSSFTSQTCNPHSRPHRKTLTLPGSVFLCRQFHLNSPSVSKTRRIRTRQSGPV) directs the protein to the chloroplast. 164–171 (MRTGEGKT) lines the ATP pocket. Residues 976–1011 (QDKMENQKSGKRNARPPTDTNPDPVGTVEPSTSASS) form a disordered region.

It belongs to the SecA family.

Its subcellular location is the plastid. The protein localises to the chloroplast stroma. It localises to the chloroplast thylakoid membrane. The enzyme catalyses ATP + H2O + chloroplast-proteinSide 1 = ADP + phosphate + chloroplast-proteinSide 2.. Functionally, has a central role in coupling the hydrolysis of ATP to the transfer of proteins across the thylakoid membrane. Facilitates the transport of precursor proteins from the chloroplast stroma to thylakoid lumen. This Pisum sativum (Garden pea) protein is Protein translocase subunit SecA, chloroplastic.